Here is a 309-residue protein sequence, read N- to C-terminus: Phytoene synthase (309 aa).

This sequence belongs to the phytoene/squalene synthase family.

The enzyme catalyses 2 (2E,6E,10E)-geranylgeranyl diphosphate = 15-cis-phytoene + 2 diphosphate. Its pathway is carotenoid biosynthesis; phytoene biosynthesis; all-trans-phytoene from geranylgeranyl diphosphate: step 1/1. Its function is as follows. Catalyzes the reaction from prephytoene diphosphate to phytoene. In Arthrospira platensis (Spirulina platensis), this protein is Phytoene synthase (crtB).